The sequence spans 339 residues: Glyceraldehyde-3-phosphate dehydrogenase (339 aa).

NAD(+) contacts are provided by residues 12 to 13 (RI), aspartate 39, arginine 84, and serine 127. D-glyceraldehyde 3-phosphate contacts are provided by residues 157–159 (SCT), threonine 188, arginine 203, 216–217 (TG), and arginine 239. Cysteine 158 functions as the Nucleophile in the catalytic mechanism. Residue asparagine 320 participates in NAD(+) binding.

This sequence belongs to the glyceraldehyde-3-phosphate dehydrogenase family. As to quaternary structure, homotetramer.

It is found in the cytoplasm. The catalysed reaction is D-glyceraldehyde 3-phosphate + phosphate + NAD(+) = (2R)-3-phospho-glyceroyl phosphate + NADH + H(+). Its pathway is carbohydrate degradation; glycolysis; pyruvate from D-glyceraldehyde 3-phosphate: step 1/5. Its function is as follows. Catalyzes the oxidative phosphorylation of glyceraldehyde 3-phosphate (G3P) to 1,3-bisphosphoglycerate (BPG) using the cofactor NAD. The first reaction step involves the formation of a hemiacetal intermediate between G3P and a cysteine residue, and this hemiacetal intermediate is then oxidized to a thioester, with concomitant reduction of NAD to NADH. The reduced NADH is then exchanged with the second NAD, and the thioester is attacked by a nucleophilic inorganic phosphate to produce BPG. In Mycobacterium leprae (strain TN), this protein is Glyceraldehyde-3-phosphate dehydrogenase (gapA).